The chain runs to 321 residues: tRNA pseudouridine synthase B (321 aa).

Residue Asp-47 is the Nucleophile of the active site.

It belongs to the pseudouridine synthase TruB family. Type 1 subfamily.

The enzyme catalyses uridine(55) in tRNA = pseudouridine(55) in tRNA. Its function is as follows. Responsible for synthesis of pseudouridine from uracil-55 in the psi GC loop of transfer RNAs. The sequence is that of tRNA pseudouridine synthase B from Shewanella baltica (strain OS223).